The primary structure comprises 938 residues: Isoleucine--tRNA ligase (938 aa).

Residues 58-68 (PYANGSIHIGH) carry the 'HIGH' region motif. K183 carries the post-translational modification N6-acetyllysine. E561 contributes to the L-isoleucyl-5'-AMP binding site. The 'KMSKS' region signature appears at 602–606 (KMSKS). K605 is an ATP binding site. 4 residues coordinate Zn(2+): C901, C904, C921, and C924.

The protein belongs to the class-I aminoacyl-tRNA synthetase family. IleS type 1 subfamily. As to quaternary structure, monomer. Requires Zn(2+) as cofactor.

The protein resides in the cytoplasm. It catalyses the reaction tRNA(Ile) + L-isoleucine + ATP = L-isoleucyl-tRNA(Ile) + AMP + diphosphate. Its function is as follows. Catalyzes the attachment of isoleucine to tRNA(Ile). As IleRS can inadvertently accommodate and process structurally similar amino acids such as valine, to avoid such errors it has two additional distinct tRNA(Ile)-dependent editing activities. One activity is designated as 'pretransfer' editing and involves the hydrolysis of activated Val-AMP. The other activity is designated 'posttransfer' editing and involves deacylation of mischarged Val-tRNA(Ile). The protein is Isoleucine--tRNA ligase of Escherichia coli (strain ATCC 8739 / DSM 1576 / NBRC 3972 / NCIMB 8545 / WDCM 00012 / Crooks).